We begin with the raw amino-acid sequence, 344 residues long: Fructose-1,6-bisphosphatase class 1 (344 aa).

The Mg(2+) site is built by Glu-92, Asp-115, Leu-117, and Asp-118. Substrate contacts are provided by residues 118 to 121 (DGSS), Asn-211, Tyr-244, and Lys-274. Glu-280 lines the Mg(2+) pocket.

The protein belongs to the FBPase class 1 family. Homotetramer. Mg(2+) serves as cofactor.

Its subcellular location is the cytoplasm. The catalysed reaction is beta-D-fructose 1,6-bisphosphate + H2O = beta-D-fructose 6-phosphate + phosphate. It participates in carbohydrate biosynthesis; gluconeogenesis. The polypeptide is Fructose-1,6-bisphosphatase class 1 (Aeromonas hydrophila subsp. hydrophila (strain ATCC 7966 / DSM 30187 / BCRC 13018 / CCUG 14551 / JCM 1027 / KCTC 2358 / NCIMB 9240 / NCTC 8049)).